The sequence spans 252 residues: MITKRIIPCLDVKDGRVVKGVQFVQLRDAGDPVELAKAYDEQGADELVFLDISASHEGRKTMVDVVERVAAQLAIPFTVGGGIHSLDDMKRILRAGADKVSLNTAAVLHPSLVTEGADFFGSQCIVVAIDAKYDDTIGSWRVYTHGGRNATEWEVVAWAKEAVRLGAGEILLTSMDADGGKNGFDVELTRRVSEAVSVPVIASGGAGKAEHFLDVFERGKADAALAASIFHYKETSVGQVKAYLRERGVNVR.

Residues D11 and D130 contribute to the active site.

The protein belongs to the HisA/HisF family. As to quaternary structure, heterodimer of HisH and HisF.

Its subcellular location is the cytoplasm. The catalysed reaction is 5-[(5-phospho-1-deoxy-D-ribulos-1-ylimino)methylamino]-1-(5-phospho-beta-D-ribosyl)imidazole-4-carboxamide + L-glutamine = D-erythro-1-(imidazol-4-yl)glycerol 3-phosphate + 5-amino-1-(5-phospho-beta-D-ribosyl)imidazole-4-carboxamide + L-glutamate + H(+). The protein operates within amino-acid biosynthesis; L-histidine biosynthesis; L-histidine from 5-phospho-alpha-D-ribose 1-diphosphate: step 5/9. IGPS catalyzes the conversion of PRFAR and glutamine to IGP, AICAR and glutamate. The HisF subunit catalyzes the cyclization activity that produces IGP and AICAR from PRFAR using the ammonia provided by the HisH subunit. The polypeptide is Imidazole glycerol phosphate synthase subunit HisF (Geobacillus thermodenitrificans (strain NG80-2)).